The sequence spans 360 residues: Mannose-1-phosphate guanylyltransferase catalytic subunit beta (360 aa).

A substrate-binding domain region spans residues 2 to 222; sequence KALILVGGYG…QGFWMDIGQP (221 aa). D110 contributes to the GDP-alpha-D-mannose binding site. D110 is a Mg(2+) binding site. The active site involves K162. D218 contacts GDP-alpha-D-mannose. Mg(2+) is bound at residue D218. The interval 245 to 360 is hexapeptide repeat domain; the sequence is CSGPGIVGNV…ESVPEPRIIM (116 aa).

The protein belongs to the transferase hexapeptide repeat family. Component of the GMPPA-GMPPB mannose-1-phosphate guanylyltransferase complex composed of 4 GMPPA subunits and 8 GMPPB subunits; the complex is organized into three layers, a central layer made up of 2 GMPPA dimers sandwiched between two layers each made up of 2 GMPPB dimers. GMPPB catalytic activity is reduced when part of the complex and binding of GDP-alpha-D-Mannose by GMPPA induces allosteric feedback inhibition of GMPPB. Mg(2+) is required as a cofactor. As to expression, ubiquitously expressed, including in brain and skeletal muscle. Weakly expressed with highest expression in skeletal muscle, brain and gonads.

It is found in the cytoplasm. The catalysed reaction is alpha-D-mannose 1-phosphate + GTP + H(+) = GDP-alpha-D-mannose + diphosphate. It participates in nucleotide-sugar biosynthesis; GDP-alpha-D-mannose biosynthesis; GDP-alpha-D-mannose from alpha-D-mannose 1-phosphate (GTP route): step 1/1. Enzyme activity is reduced by incorporation into the GMPPA-GMPPB mannose-1-phosphate guanylyltransferase complex. Allosterically inhibited, when part of the GMPPA-GMPPB complex, by GDP-alpha-D-mannose binding to GMPPA. In terms of biological role, catalytic subunit of the GMPPA-GMPPB mannose-1-phosphate guanylyltransferase complex. Catalyzes the formation of GDP-mannose, an essential precursor of glycan moieties of glycoproteins and glycolipids. Can catalyze the reverse reaction in vitro. Together with GMPPA regulates GDP-alpha-D-mannose levels. The sequence is that of Mannose-1-phosphate guanylyltransferase catalytic subunit beta from Homo sapiens (Human).